The following is a 96-amino-acid chain: UPF0235 protein VP2619 (96 aa).

This sequence belongs to the UPF0235 family.

This is UPF0235 protein VP2619 from Vibrio parahaemolyticus serotype O3:K6 (strain RIMD 2210633).